The sequence spans 732 residues: Acylamino-acid-releasing enzyme (732 aa).

At M1 the chain carries N-acetylmethionine. Phosphoserine occurs at positions 185 and 187. Residues S587, D675, and H707 each act as charge relay system in the active site.

This sequence belongs to the peptidase S9C family. In terms of assembly, homotetramer.

It localises to the cytoplasm. It carries out the reaction Cleavage of an N-acetyl or N-formyl amino acid from the N-terminus of a polypeptide.. Its activity is regulated as follows. Homotetramerization is required for activity. Tetramerization results in the formation of a gated channel which is involved in substrate selection and substrate access to the catalytic sites. In terms of biological role, this enzyme catalyzes the hydrolysis of the N-terminal peptide bond of an N-acetylated peptide to generate an N-acetylated amino acid and a peptide with a free N-terminus. It preferentially cleaves off Ac-Ala, Ac-Met and Ac-Ser. Also, involved in the degradation of oxidized and glycated proteins. This Mus musculus (Mouse) protein is Acylamino-acid-releasing enzyme (Apeh).